Consider the following 1305-residue polypeptide: ABC transporter FPSE_09185 (1305 aa).

N28 is a glycosylation site (N-linked (GlcNAc...) asparagine). 6 consecutive transmembrane segments (helical) span residues 44–64 (FCVYVVGALASIGVGVTMPLM), 99–119 (LYIVGLFLGRWLLNSINKFCF), 172–192 (RLGTFVTYVSTIIAAIAVAFT), 199–219 (IVSASLLVYIAIIIAIVVPIY), 277–297 (IIGAQTGLVFFGIFGVFGLAF), and 312–332 (VGVVIIVLTSVMLILFAFSYL). Residues 48-348 (VVGALASIGV…ISQAMVAATE (301 aa)) form the ABC transmembrane type-1 1 domain. Positions 372–663 (LIFKDVTFEY…ENGVYYSLVE (292 aa)) constitute an ABC transporter 1 domain. 407–414 (GPSGSGKS) provides a ligand contact to ATP. Residues 434-454 (EAATPRSSKEGERDNHDERKY) are disordered. The span at 440 to 454 (SSKEGERDNHDERKY) shows a compositional bias: basic and acidic residues. N-linked (GlcNAc...) asparagine glycans are attached at residues N468, N507, and N525. The next 6 membrane-spanning stretches (helical) occupy residues 737-757 (FLLITIASMGVGAATPLQAWL), 780-800 (GFMWLALAGGVGVAYFFQCWI), 851-873 (GVFGLNLASATSSVFTIVGCLII), 877-899 (FGWKLGLVGLCVTVPIMMVSGFW), 964-984 (AVIFGFAESATLGCQALILWY), and 999-1019 (FMVSYMAIINGVEYAGQILGV). The region spanning 738 to 1025 (LLITIASMGV…ILGVAPSAAQ (288 aa)) is the ABC transmembrane type-1 2 domain. Residues 1038–1057 (DSNRSSQEAEKSGPTVEDTD) form a disordered region. 3 N-linked (GlcNAc...) asparagine glycosylation sites follow: N1040, N1066, and N1075. The ABC transporter 2 domain occupies 1062–1300 (IELCNVSFKY…RGIYWDMCQT (239 aa)). 1096–1103 (GPSGCGKT) serves as a coordination point for ATP. N1125 carries N-linked (GlcNAc...) asparagine glycosylation.

It belongs to the ABC transporter superfamily. ABCB family. Multidrug resistance exporter (TC 3.A.1.201) subfamily.

Its subcellular location is the membrane. Functionally, ABC transporter; part of the gene cluster that mediates the biosynthesis of the lipopeptides W493 A and B. W493 A and B consist of six amino acid residues D-allo-thr, L-Ala, D-Ala, L-Gln, D-Tyr, and L-Val/L-Ile linked to a 3-hydroxy-4-methyltetradecanoic acid polyketide chain. May be involved in excretion or internal transport of W493 A and B. This is ABC transporter FPSE_09185 from Fusarium pseudograminearum (strain CS3096) (Wheat and barley crown-rot fungus).